We begin with the raw amino-acid sequence, 262 residues long: Flap endonuclease Xni (262 aa).

A Mg(2+)-binding site is contributed by aspartate 105. Positions 164 to 251 (SQFLDLMALA…NINLKDFRAN (88 aa)) constitute a 5'-3' exonuclease domain. K(+) contacts are provided by leucine 172, alanine 173, proline 181, isoleucine 183, and isoleucine 186. Positions 185–190 (GIGPKS) are interaction with DNA.

Belongs to the Xni family. Mg(2+) serves as cofactor. K(+) is required as a cofactor.

Functionally, has flap endonuclease activity. During DNA replication, flap endonucleases cleave the 5'-overhanging flap structure that is generated by displacement synthesis when DNA polymerase encounters the 5'-end of a downstream Okazaki fragment. The polypeptide is Flap endonuclease Xni (Shewanella sp. (strain W3-18-1)).